Consider the following 291-residue polypeptide: tRNA U34 carboxymethyltransferase (291 aa).

Residues K61, W75, K80, G100, 122-124 (DPS), 149-150 (VE), Y169, and R284 contribute to the carboxy-S-adenosyl-L-methionine site.

This sequence belongs to the class I-like SAM-binding methyltransferase superfamily. CmoB family. As to quaternary structure, homotetramer.

The catalysed reaction is carboxy-S-adenosyl-L-methionine + 5-hydroxyuridine(34) in tRNA = 5-carboxymethoxyuridine(34) in tRNA + S-adenosyl-L-homocysteine + H(+). In terms of biological role, catalyzes carboxymethyl transfer from carboxy-S-adenosyl-L-methionine (Cx-SAM) to 5-hydroxyuridine (ho5U) to form 5-carboxymethoxyuridine (cmo5U) at position 34 in tRNAs. In Campylobacter jejuni subsp. jejuni serotype O:2 (strain ATCC 700819 / NCTC 11168), this protein is tRNA U34 carboxymethyltransferase.